The primary structure comprises 465 residues: VGFKAGVKDYKLTYYTPNYETKDTDILAAFRVSPQPGVPPEEAGAAVAAESSTGTWTTVWTDGLTSLDRYKGRCYHIEPVAGEENQFIAYVAYPLDLFEEGSVTNMFTSIVGNVFGFKALRALRLEDLRIPPAYVKTFQGPPHGIQVERDKLNKYGRPLLGCTIKPKLGLSAKNYGRAVYECLRGGLDFTKDDENVNSQPFMRWRDRLLFCAEAIYKAQAETGEIKGHYLNATAGTCEEMMKRAVFARELGVPIVMHDYLTGGFTANTTLAHYCRDNGLLLHIHRAMHAVIDRQKNHGIHFRVLAKALRMSGGDHIHAGTVVGKLEGERDITLGFVDLLRDDFIEKDRSRGIYFTQDWVSLPGVIPVASGGIHVWHMPALTEIFGDDSVLQFGGGTLGHPWGNAPGAVANRVALEACVQARNEGRDLAREGNEIIREASKWSPELAAACEVWKEIKFEFPAMDTL.

K4 carries the N6,N6,N6-trimethyllysine modification. Residues N113 and T163 each coordinate substrate. K165 functions as the Proton acceptor in the catalytic mechanism. Residue K167 participates in substrate binding. Mg(2+)-binding residues include K191, D193, and E194. Position 191 is an N6-carboxylysine (K191). Catalysis depends on H284, which acts as the Proton acceptor. Positions 285, 317, and 369 each coordinate substrate.

This sequence belongs to the RuBisCO large chain family. Type I subfamily. Heterohexadecamer of 8 large chains and 8 small chains; disulfide-linked. The disulfide link is formed within the large subunit homodimers. Mg(2+) is required as a cofactor. Post-translationally, the disulfide bond which can form in the large chain dimeric partners within the hexadecamer appears to be associated with oxidative stress and protein turnover.

It localises to the plastid. It is found in the chloroplast. It catalyses the reaction 2 (2R)-3-phosphoglycerate + 2 H(+) = D-ribulose 1,5-bisphosphate + CO2 + H2O. The enzyme catalyses D-ribulose 1,5-bisphosphate + O2 = 2-phosphoglycolate + (2R)-3-phosphoglycerate + 2 H(+). Its function is as follows. RuBisCO catalyzes two reactions: the carboxylation of D-ribulose 1,5-bisphosphate, the primary event in carbon dioxide fixation, as well as the oxidative fragmentation of the pentose substrate in the photorespiration process. Both reactions occur simultaneously and in competition at the same active site. The polypeptide is Ribulose bisphosphate carboxylase large chain (Bauera rubioides (Dog rose)).